The chain runs to 633 residues: Extracellular metalloproteinase 3 (633 aa).

Residues 1 to 18 (MHGLLLAGLLALPMNVLA) form the signal peptide. A propeptide spanning residues 19–246 (HPAEHHASNV…VHNVVDYVAS (228 aa)) is cleaved from the precursor. Asn-232 and Asn-410 each carry an N-linked (GlcNAc...) asparagine glycan. Position 429 (His-429) interacts with Zn(2+). Residue Glu-430 is part of the active site. His-433 is a binding site for Zn(2+). Residues Asn-480 and Asn-622 are each glycosylated (N-linked (GlcNAc...) asparagine).

The protein belongs to the peptidase M36 family. The cofactor is Zn(2+).

It is found in the secreted. Functionally, secreted metalloproteinase that allows assimilation of proteinaceous substrates and probably acts as a virulence factor. This Arthroderma gypseum (strain ATCC MYA-4604 / CBS 118893) (Microsporum gypseum) protein is Extracellular metalloproteinase 3 (MEP3).